We begin with the raw amino-acid sequence, 349 residues long: Interferon-stimulated 20 kDa exonuclease-like 2 (349 aa).

2 disordered regions span residues 1–100 (MSTL…AAVP) and 126–166 (ALPK…KYSG). A compositionally biased stretch (basic and acidic residues) spans 14–23 (PPKKALEGNA). Residues 24 to 47 (KHRKFVKKRRLLERKGFLNKKKQP) show a composition bias toward basic residues. Residues 54 to 66 (LHSEPSQKGETPR) are compositionally biased toward basic and acidic residues. The span at 70 to 87 (TWKATPLPKKKTTAASSS) shows a compositional bias: low complexity. The span at 130 to 142 (IKSHPTRPQKKGS) shows a compositional bias: basic residues. One can recognise an Exonuclease domain in the interval 175 to 331 (MVAIDCEMVG…EDAQATMELY (157 aa)).

The protein localises to the nucleus. It is found in the nucleolus. In terms of biological role, 3'-&gt; 5'-exoribonuclease involved in ribosome biogenesis in the processing of the 12S pre-rRNA. Displays a strong specificity for a 3'-end containing a free hydroxyl group. The polypeptide is Interferon-stimulated 20 kDa exonuclease-like 2 (ISG20L2) (Bos taurus (Bovine)).